Reading from the N-terminus, the 239-residue chain is ATP-dependent dethiobiotin synthetase BioD (239 aa).

Residue 13–18 (EIGKTV) coordinates ATP. Thr17 serves as a coordination point for Mg(2+). Residue Lys38 is part of the active site. Thr42 is a substrate binding site. The Mg(2+) site is built by Lys59 and Glu111. ATP contacts are provided by residues 111-114 (EGAG), 175-176 (NQ), and 204-206 (PSL).

This sequence belongs to the dethiobiotin synthetase family. In terms of assembly, homodimer. Requires Mg(2+) as cofactor.

It is found in the cytoplasm. It carries out the reaction (7R,8S)-7,8-diammoniononanoate + CO2 + ATP = (4R,5S)-dethiobiotin + ADP + phosphate + 3 H(+). Its pathway is cofactor biosynthesis; biotin biosynthesis; biotin from 7,8-diaminononanoate: step 1/2. Catalyzes a mechanistically unusual reaction, the ATP-dependent insertion of CO2 between the N7 and N8 nitrogen atoms of 7,8-diaminopelargonic acid (DAPA, also called 7,8-diammoniononanoate) to form a ureido ring. The protein is ATP-dependent dethiobiotin synthetase BioD of Geobacillus sp. (strain WCH70).